The sequence spans 242 residues: Peroxisomal membrane protein 11-3 (242 aa).

The interval 1–22 (MAAAAAAAGSSDSRKPAAHPPP) is disordered. The Cytoplasmic portion of the chain corresponds to 1 to 102 (MAAAAAAAGS…LRAHPHPPPA (102 aa)). A helical transmembrane segment spans residues 103–123 (VALLAYGGEGVYYFLEQFVWL). Topologically, residues 124–214 (AKAGLLPAHL…MALGDVTDGK (91 aa)) are lumenal. A helical membrane pass occupies residues 215–235 (GLLGSSTLMASAGLLSALISA). At 236–242 (HKNWNSC) the chain is on the cytoplasmic side.

The protein belongs to the peroxin-11 family. In terms of tissue distribution, expressed in seedlings, roots, leaf sheaths, spikelets and endosperm.

It is found in the peroxisome membrane. In terms of biological role, involved in peroxisomal proliferation. The sequence is that of Peroxisomal membrane protein 11-3 (PEX11-3) from Oryza sativa subsp. japonica (Rice).